Consider the following 1857-residue polypeptide: Fatty acid synthase subunit alpha (1857 aa).

The interval 96 to 132 (EEEPEATEPAPSATPAAPAAAPAAGAPPPPPSAGPAA) is disordered. The span at 102-119 (TEPAPSATPAAPAAAPAA) shows a compositional bias: low complexity. One can recognise a Carrier domain in the interval 139-214 (VTAVDILRTL…ASMQATFNGQ (76 aa)). Residue Ser-174 is modified to O-(pantetheine 4'-phosphoryl)serine. Positions 577–604 (QIIPQENGHSKKGGRSAAKRNTPTRPGK) are disordered. The segment at 648-845 (KNVLMTGAGA…GAVIGWTRGT (198 aa)) is beta-ketoacyl reductase. Residues 1092–1633 (LQEIVIQEDL…QKGAQVIGIH (542 aa)) form the Ketosynthase family 3 (KS3) domain. Catalysis depends on for beta-ketoacyl synthase activity residues Cys-1275, His-1518, and His-1559. Positions 1743, 1744, and 1745 each coordinate Mg(2+). Residues 1743 to 1745 (DVE), Tyr-1769, Ser-1779, 1788 to 1798 (EAVFKSLGVSS), 1812 to 1815 (VDAN), and 1842 to 1844 (ISH) each bind acetyl-CoA. Ser-1843 and His-1844 together coordinate Mg(2+).

The protein belongs to the thiolase-like superfamily. Fungal fatty acid synthetase subunit alpha family. [Alpha(6)beta(6)] hexamers of two multifunctional subunits (alpha and beta).

It catalyses the reaction acetyl-CoA + n malonyl-CoA + 2n NADPH + 4n H(+) = a long-chain-acyl-CoA + n CoA + n CO2 + 2n NADP(+).. The enzyme catalyses a fatty acyl-[ACP] + malonyl-[ACP] + H(+) = a 3-oxoacyl-[ACP] + holo-[ACP] + CO2. It carries out the reaction a (3R)-hydroxyacyl-[ACP] + NADP(+) = a 3-oxoacyl-[ACP] + NADPH + H(+). Functionally, fatty acid synthetase catalyzes the formation of long-chain fatty acids from acetyl-CoA, malonyl-CoA and NADPH. The alpha subunit contains domains for: acyl carrier protein, 3-oxoacyl-[acyl-carrier-protein] reductase, and 3-oxoacyl-[acyl-carrier-protein] synthase. The chain is Fatty acid synthase subunit alpha (FAS2) from Penicillium patulum (Penicillium griseofulvum).